Here is a 366-residue protein sequence, read N- to C-terminus: MSSNFLNPVTTQTWANGRHLVRCVKVIQETWDVRTFCFMADQPILFFFKPGQFVTLELEIDGEPVMRSYTISSSPSVPYSFSITIKRVPGGRVSNWLHDNLKEGQELPVHGPVGLFNAIDFPADKVLFLSGGVGITPVMSMARWFFDTNANVDMVFVHSARSPKDIIYHRELEHMASRIDNFSLHIICERHGLGEAWAGYRGYLNLRMLELIAPDFLEREIFCCGPTPYMSAVKHLLQGHGYDMSRYHEEAFGPTPPEVRADVRELAAEAAEAPEVPVADQHQVEFTATGKSIRVSPGETVHAAAAKLGLHIPKACGMGICGTCKVMKTAGEVEMEHNGGITDEDVAEGYILSCCSVPKGDVVIDY.

Residues 16-119 (NGRHLVRCVK…HGPVGLFNAI (104 aa)) form the FAD-binding FR-type domain. A 2Fe-2S ferredoxin-type domain is found at 282–366 (HQVEFTATGK…VPKGDVVIDY (85 aa)). [2Fe-2S] cluster is bound by residues C316, C321, C324, and C354.

The protein in the N-terminal section; belongs to the FAD-binding oxidoreductase type 6 family. As to quaternary structure, the system is composed of an oxygenase subunit (GbcA) and a reductase subunit (GbcB). FAD is required as a cofactor. Requires [2Fe-2S] cluster as cofactor.

It catalyses the reaction glycine betaine + NADH + O2 + H(+) = N,N-dimethylglycine + formaldehyde + NAD(+) + H2O. Involved in degradation of glycine betaine. Part of a Rieske-type oxygenase system that catalyzes the conversion of glycine betaine (GB) to dimethylglycine (DMG). This subunit is the ferredoxin reductase component of the system. Required for growth on choline and GB, but not for growth on DMG. The polypeptide is Glycine betaine monooxygenase reductase subunit (Pseudomonas aeruginosa (strain ATCC 15692 / DSM 22644 / CIP 104116 / JCM 14847 / LMG 12228 / 1C / PRS 101 / PAO1)).